The primary structure comprises 778 residues: Ral guanine nucleotide dissociation stimulator-like 2 (778 aa).

Residues Met1–Pro15 show a composition bias toward low complexity. A disordered region spans residues Met1–Asp59. Positions Asp33 to Gly42 are enriched in gly residues. Residues Gln43–Asp59 show a composition bias toward acidic residues. One can recognise an N-terminal Ras-GEF domain in the interval Ser88–Arg212. The 271-residue stretch at Leu243–Pro513 folds into the Ras-GEF domain. Disordered regions lie at residues Ser503–Pro524, Gly541–Ala564, Ser581–Ser647, and Arg735–Thr769. Residues Ser581–Leu592 are compositionally biased toward low complexity. Residues Cys620–Thr632 are compositionally biased toward polar residues. Residues Asp649 to Arg736 enclose the Ras-associating domain. Positions Ser738 to Ser756 are enriched in low complexity.

Interacts with SAMD9.

Probable guanine nucleotide exchange factor. Putative effector of Ras and/or Rap. Associates with the GTP-bound form of Rap 1A and H-Ras in vitro. In Mus musculus (Mouse), this protein is Ral guanine nucleotide dissociation stimulator-like 2 (Rgl2).